The chain runs to 307 residues: tRNA N(3)-methylcytidine methyltransferase trm140 (307 aa).

S-adenosyl-L-methionine-binding residues include tryptophan 83, tyrosine 87, glycine 125, aspartate 150, aspartate 176, leucine 177, and isoleucine 197.

Belongs to the methyltransferase superfamily. METL family.

It catalyses the reaction cytidine(32) in tRNA(Thr) + S-adenosyl-L-methionine = N(3)-methylcytidine(32) in tRNA(Thr) + S-adenosyl-L-homocysteine + H(+). S-adenosyl-L-methionine-dependent methyltransferase that mediates N(3)-methylcytidine modification of residue 32 of the tRNA anticodon loop of tRNA(Thr). Does not catalyze N(3)-methylcytidine modification of tRNA(Ser). The chain is tRNA N(3)-methylcytidine methyltransferase trm140 from Schizosaccharomyces pombe (strain 972 / ATCC 24843) (Fission yeast).